The following is a 204-amino-acid chain: Putative copper-binding protein (204 aa).

Residues Cys-77, Cys-81, and His-166 each contribute to the Cu cation site.

It belongs to the SCO1/2 family.

In Stutzerimonas stutzeri (Pseudomonas stutzeri), this protein is Putative copper-binding protein (scoP).